A 707-amino-acid polypeptide reads, in one-letter code: Acyl-CoA ligase 891, peroxisomal (707 aa).

ATP is bound at residue 259-270 (INYTSGTTGPPK). The fatty acid-binding stretch occupies residues 525–549 (DGWFRTGDVCTIDEKGRFIIIDRRK). The Peroxisome targeting signal motif lies at 705–707 (AKL).

Belongs to the ATP-dependent AMP-binding enzyme family.

It localises to the peroxisome matrix. It carries out the reaction (4E,8E)-10-(4-hydroxy-6-methoxy-7-methyl-3-oxo-1,3-dihydro-2-benzofuran-5-yl)-4,8-dimethyldeca-4,8-dienoate + ATP + CoA = (4E,8E)-10-(4-hydroxy-6-methoxy-7-methyl-3-oxo-1,3-dihydro-2-benzofuran-5-yl)-4,8-dimethyldeca-4,8-dienoyl-CoA + AMP + diphosphate. The protein operates within secondary metabolite biosynthesis; terpenoid biosynthesis. Its function is as follows. Acyl-CoA ligase involved in the biosynthesis of mycophenolic acid (MPA), the first isolated antibiotic natural product in the world obtained from a culture of Penicillium brevicompactum in 1893. The peroxisomal acyl-CoA ligase 891 converts the intermediate MFDHMP-3C into MFDHMP-3C-CoA which impairs its diffusion from the peroxisome. The first step of the pathway is the synthesis of 5-methylorsellinic acid (5MOA) by the cytosolic polyketide synthase mpaC. 5MOA is then converted to the phthalide compound 5,7-dihydroxy-4,6-dimethylphthalide (DHMP) by the endoplasmic reticulum-bound cytochrome P450 monooxygenase mpaDE. MpaDE first catalyzes hydroxylation of 5-MOA to 4,6-dihydroxy-2-(hydroxymethyl)-3-methylbenzoic acid (DHMB). MpaDE then acts as a lactone synthase that catalyzes the ring closure to convert DHMB into DHMP. The next step is the prenylation of DHMP by the Golgi apparatus-associated prenyltransferase mpaA to yield farnesyl-DHMP (FDHMP). The ER-bound oxygenase mpaB then mediates the oxidative cleavage the C19-C20 double bond in FDHMP to yield FDHMP-3C via a mycophenolic aldehyde intermediate. The O-methyltransferase mpaG catalyzes the methylation of FDHMP-3C to yield MFDHMP-3C. After the cytosolic methylation of FDHMP-3C, MFDHMP-3C enters into peroxisomes probably via free diffusion due to its low molecular weight. Upon a peroxisomal CoA ligation reaction, catalyzed by a beta-oxidation component enzyme acyl-CoA ligase ACL891, MFDHMP-3C-CoA would then be restricted to peroxisomes for the following beta-oxidation pathway steps. The peroxisomal beta-oxidation machinery than converts MFDHMP-3C-CoA into MPA_CoA, via a beta-oxidation chain-shortening process. Finally mpaH acts as a peroxisomal acyl-CoA hydrolase with high substrate specificity toward MPA-CoA to release the final product MPA. In Penicillium roqueforti (strain FM164), this protein is Acyl-CoA ligase 891, peroxisomal.